A 470-amino-acid polypeptide reads, in one-letter code: Neuronal acetylcholine receptor subunit beta-4 (470 aa).

A signal peptide spans 1 to 3; that stretch reads STA. At 4 to 216 the chain is on the extracellular side; sequence ADAEEKLMNH…IIKRKPLFYT (213 aa). N-linked (GlcNAc...) asparagine glycosylation is found at N29, N118, and N146. A disulfide bridge links C133 with C147. Residues 217 to 237 traverse the membrane as a helical segment; that stretch reads INLIIPCVLITSLAILVFYLP. Residues 238-245 are Cytoplasmic-facing; that stretch reads SDCGEKMT. Residue E242 participates in Na(+) binding. Residues 246-266 traverse the membrane as a helical segment; sequence LCISVLLALTVFLLLISKIVP. At 267-278 the chain is on the extracellular side; that stretch reads PTSLDVPLIGKY. A helical membrane pass occupies residues 279-299; it reads LMFTMVLVTFSIVTSVCVLNV. The Cytoplasmic portion of the chain corresponds to 300 to 438; it reads HHRSPSTHTM…WKYVAMVVDR (139 aa). The helical transmembrane segment at 439–459 threads the bilayer; it reads LFLWIFVLVCVLGTVGLFLQP. The Extracellular portion of the chain corresponds to 460–470; sequence LFQNHIAATNP.

The protein belongs to the ligand-gated ion channel (TC 1.A.9) family. Acetylcholine receptor (TC 1.A.9.1) subfamily. Beta-4/CHRNB4 sub-subfamily. In terms of assembly, neuronal AChR is composed of two different types of subunits: alpha and beta. CHRNB4/Beta-4 subunit can be combined to CHRNA2/alpha-2, CHRNA3/alpha-3 or CHRNA4/alpha-4, CHRNA5/alpha-5 and CHRNB3/beta-3 to give rise to functional receptors.

Its subcellular location is the synaptic cell membrane. It localises to the cell membrane. It carries out the reaction Ca(2+)(in) = Ca(2+)(out). It catalyses the reaction K(+)(in) = K(+)(out). The catalysed reaction is Na(+)(in) = Na(+)(out). Its activity is regulated as follows. Activated by a myriad of ligands such as acetylcholine, cytisine, nicotine, choline and epibatidine. The heteropentamer CHRNA3:CHRNB4 activity is blocked by the alpha-conotoxin ImI and AuIB. Functionally, component of neuronal acetylcholine receptors (nAChRs) that function as pentameric, ligand-gated cation channels with high calcium permeability among other activities. nAChRs are excitatory neurotrasnmitter receptors formed by a collection of nAChR subunits known to mediate synaptic transmission in the nervous system and the neuromuscular junction. Each nAchR subunit confers differential attributes to channel properties, including activation, deactivation and desensitization kinetics, pH sensitivity, cation permeability, and binding to allosteric modulators. CHRNB4 forms heteropentameric neuronal acetylcholine receptors with CHRNA2, CHRNA3 and CHRNA4, as well as CHRNA5 and CHRNB3 as accesory subunits. CHRNA3:CHRNB4 being predominant in neurons of the autonomic ganglia, it is known as ganglionic nicotinic receptor. CHRNA3:CHRNB4 or CHRNA3:CHRNA5:CHRNB4 play also an important role in the habenulo-interpeduncular tract, modulating the mesolimbic dopamine system and affecting reward circuits and addiction. Hypothalamic CHRNA3:CHRNB4 nAChR activation by nicotine leads to activation of POMC neurons and a decrease in food intake. The protein is Neuronal acetylcholine receptor subunit beta-4 (CHRNB4) of Gallus gallus (Chicken).